A 547-amino-acid polypeptide reads, in one-letter code: CTP synthase (547 aa).

Residues 1-266 form an amidoligase domain region; sequence MTKYIFVTGG…GDYLVERLGL (266 aa). Serine 13 contributes to the CTP binding site. Serine 13 serves as a coordination point for UTP. 14–19 contributes to the ATP binding site; it reads SVGKGI. Tyrosine 54 contacts L-glutamine. Aspartate 71 provides a ligand contact to ATP. 2 residues coordinate Mg(2+): aspartate 71 and glutamate 141. Residues 148–150, 187–192, and lysine 223 contribute to the CTP site; these read DIE and KTKPTQ. Residues 187-192 and lysine 223 each bind UTP; that span reads KTKPTQ. Residues 291–533 form the Glutamine amidotransferase type-1 domain; the sequence is PIALVGKYVE…IAAAAQTLLA (243 aa). Glycine 353 provides a ligand contact to L-glutamine. The Nucleophile; for glutamine hydrolysis role is filled by cysteine 380. L-glutamine is bound by residues 381-384, glutamate 404, and arginine 461; that span reads LGMQ. Active-site residues include histidine 506 and glutamate 508.

The protein belongs to the CTP synthase family. In terms of assembly, homotetramer.

It carries out the reaction UTP + L-glutamine + ATP + H2O = CTP + L-glutamate + ADP + phosphate + 2 H(+). The enzyme catalyses L-glutamine + H2O = L-glutamate + NH4(+). It catalyses the reaction UTP + NH4(+) + ATP = CTP + ADP + phosphate + 2 H(+). It functions in the pathway pyrimidine metabolism; CTP biosynthesis via de novo pathway; CTP from UDP: step 2/2. Allosterically activated by GTP, when glutamine is the substrate; GTP has no effect on the reaction when ammonia is the substrate. The allosteric effector GTP functions by stabilizing the protein conformation that binds the tetrahedral intermediate(s) formed during glutamine hydrolysis. Inhibited by the product CTP, via allosteric rather than competitive inhibition. Functionally, catalyzes the ATP-dependent amination of UTP to CTP with either L-glutamine or ammonia as the source of nitrogen. Regulates intracellular CTP levels through interactions with the four ribonucleotide triphosphates. The sequence is that of CTP synthase from Chloroflexus aggregans (strain MD-66 / DSM 9485).